The primary structure comprises 320 residues: Beta-ketoacyl-[acyl-carrier-protein] synthase III (320 aa).

Active-site residues include cysteine 114 and histidine 247. The ACP-binding stretch occupies residues 248–252; that stretch reads QANRR. The active site involves asparagine 277.

The protein belongs to the thiolase-like superfamily. FabH family. In terms of assembly, homodimer.

It localises to the cytoplasm. It catalyses the reaction malonyl-[ACP] + acetyl-CoA + H(+) = 3-oxobutanoyl-[ACP] + CO2 + CoA. The protein operates within lipid metabolism; fatty acid biosynthesis. Its function is as follows. Catalyzes the condensation reaction of fatty acid synthesis by the addition to an acyl acceptor of two carbons from malonyl-ACP. Catalyzes the first condensation reaction which initiates fatty acid synthesis and may therefore play a role in governing the total rate of fatty acid production. Possesses both acetoacetyl-ACP synthase and acetyl transacylase activities. Its substrate specificity determines the biosynthesis of branched-chain and/or straight-chain of fatty acids. The polypeptide is Beta-ketoacyl-[acyl-carrier-protein] synthase III (Neisseria meningitidis serogroup C (strain 053442)).